A 142-amino-acid chain; its full sequence is Alpha-lactalbumin (142 aa).

The signal sequence occupies residues 1–19; it reads MMSFVSLLLVGILFHATQA. The C-type lysozyme domain occupies 20–142; that stretch reads EQLTKCEVFR…KLDQWLCEKL (123 aa). Disulfide bonds link C25–C139, C47–C130, C80–C96, and C92–C110. Residues N64 and N93 are each glycosylated (N-linked (GlcNAc...) asparagine). Positions 98, 101, 103, 106, and 107 each coordinate Ca(2+).

It belongs to the glycosyl hydrolase 22 family. In terms of assembly, lactose synthase (LS) is a heterodimer of a catalytic component, beta1,4-galactosyltransferase (beta4Gal-T1) and a regulatory component, alpha-lactalbumin (LA). As to expression, mammary gland specific. Secreted in milk.

The protein resides in the secreted. Functionally, regulatory subunit of lactose synthase, changes the substrate specificity of galactosyltransferase in the mammary gland making glucose a good acceptor substrate for this enzyme. This enables LS to synthesize lactose, the major carbohydrate component of milk. In other tissues, galactosyltransferase transfers galactose onto the N-acetylglucosamine of the oligosaccharide chains in glycoproteins. This is Alpha-lactalbumin (LALBA) from Bos mutus grunniens (Wild yak).